Reading from the N-terminus, the 549-residue chain is Glucose-6-phosphate isomerase (549 aa).

N6-acetyllysine occurs at positions 80, 228, and 234. Glu355 acts as the Proton donor in catalysis. Residues His386 and Lys514 contribute to the active site.

This sequence belongs to the GPI family.

The protein localises to the cytoplasm. The catalysed reaction is alpha-D-glucose 6-phosphate = beta-D-fructose 6-phosphate. It functions in the pathway carbohydrate biosynthesis; gluconeogenesis. Its pathway is carbohydrate degradation; glycolysis; D-glyceraldehyde 3-phosphate and glycerone phosphate from D-glucose: step 2/4. Its function is as follows. Catalyzes the reversible isomerization of glucose-6-phosphate to fructose-6-phosphate. The chain is Glucose-6-phosphate isomerase from Escherichia coli O17:K52:H18 (strain UMN026 / ExPEC).